A 117-amino-acid polypeptide reads, in one-letter code: Large ribosomal subunit protein uL18 (117 aa).

Belongs to the universal ribosomal protein uL18 family. In terms of assembly, part of the 50S ribosomal subunit; part of the 5S rRNA/L5/L18/L25 subcomplex. Contacts the 5S and 23S rRNAs.

In terms of biological role, this is one of the proteins that bind and probably mediate the attachment of the 5S RNA into the large ribosomal subunit, where it forms part of the central protuberance. This chain is Large ribosomal subunit protein uL18, found in Nitrosococcus oceani (strain ATCC 19707 / BCRC 17464 / JCM 30415 / NCIMB 11848 / C-107).